Consider the following 155-residue polypeptide: Interleukin-2 (155 aa).

The first 20 residues, 1-20 (MYKIQLLSCIALTLALVANG), serve as a signal peptide directing secretion. The O-linked (GalNAc...) threonine glycan is linked to Thr23. Cys79 and Cys127 are disulfide-bonded.

The protein belongs to the IL-2 family.

It is found in the secreted. Functionally, cytokine produced by activated CD4-positive helper T-cells and to a lesser extend activated CD8-positive T-cells and natural killer (NK) cells that plays pivotal roles in the immune response and tolerance. Binds to a receptor complex composed of either the high-affinity trimeric IL-2R (IL2RA/CD25, IL2RB/CD122 and IL2RG/CD132) or the low-affinity dimeric IL-2R (IL2RB and IL2RG). Interaction with the receptor leads to oligomerization and conformation changes in the IL-2R subunits resulting in downstream signaling starting with phosphorylation of JAK1 and JAK3. In turn, JAK1 and JAK3 phosphorylate the receptor to form a docking site leading to the phosphorylation of several substrates including STAT5. This process leads to activation of several pathways including STAT, phosphoinositide-3-kinase/PI3K and mitogen-activated protein kinase/MAPK pathways. Functions as a T-cell growth factor and can increase NK-cell cytolytic activity as well. Promotes strong proliferation of activated B-cells and subsequently immunoglobulin production. Plays a pivotal role in regulating the adaptive immune system by controlling the survival and proliferation of regulatory T-cells, which are required for the maintenance of immune tolerance. Moreover, participates in the differentiation and homeostasis of effector T-cell subsets, including Th1, Th2, Th17 as well as memory CD8-positive T-cells. The sequence is that of Interleukin-2 (IL2) from Bos taurus (Bovine).